The primary structure comprises 351 residues: Large ribosomal subunit protein uL3 (351 aa).

Disordered regions lie at residues 1-31 and 246-271; these read MGHRKLASPRRGSAGLRPRKRSSELLPTPRT and KGSRKIGTRGPSLGTPSYTPQPGQLG.

Belongs to the universal ribosomal protein uL3 family. Part of the 50S ribosomal subunit. Forms a cluster with proteins L14 and L24e.

Its function is as follows. One of the primary rRNA binding proteins, it binds directly near the 3'-end of the 23S rRNA, where it nucleates assembly of the 50S subunit. In Saccharolobus solfataricus (strain ATCC 35092 / DSM 1617 / JCM 11322 / P2) (Sulfolobus solfataricus), this protein is Large ribosomal subunit protein uL3.